Reading from the N-terminus, the 99-residue chain is Nucleoid-associated protein LL0120 (99 aa).

The protein belongs to the YbaB/EbfC family. In terms of assembly, homodimer.

It localises to the cytoplasm. The protein resides in the nucleoid. Binds to DNA and alters its conformation. May be involved in regulation of gene expression, nucleoid organization and DNA protection. The polypeptide is Nucleoid-associated protein LL0120 (ybcG) (Lactococcus lactis subsp. lactis (strain IL1403) (Streptococcus lactis)).